A 264-amino-acid chain; its full sequence is Thymidylate synthase (264 aa).

R21 is a binding site for dUMP. H51 contributes to the (6R)-5,10-methylene-5,6,7,8-tetrahydrofolate binding site. 126-127 (RR) contributes to the dUMP binding site. C146 serves as the catalytic Nucleophile. DUMP-binding positions include 166 to 169 (RSAD), N177, and 207 to 209 (HLY). D169 is a (6R)-5,10-methylene-5,6,7,8-tetrahydrofolate binding site. S263 contributes to the (6R)-5,10-methylene-5,6,7,8-tetrahydrofolate binding site.

The protein belongs to the thymidylate synthase family. Bacterial-type ThyA subfamily. Homodimer.

Its subcellular location is the cytoplasm. It catalyses the reaction dUMP + (6R)-5,10-methylene-5,6,7,8-tetrahydrofolate = 7,8-dihydrofolate + dTMP. It functions in the pathway pyrimidine metabolism; dTTP biosynthesis. Functionally, catalyzes the reductive methylation of 2'-deoxyuridine-5'-monophosphate (dUMP) to 2'-deoxythymidine-5'-monophosphate (dTMP) while utilizing 5,10-methylenetetrahydrofolate (mTHF) as the methyl donor and reductant in the reaction, yielding dihydrofolate (DHF) as a by-product. This enzymatic reaction provides an intracellular de novo source of dTMP, an essential precursor for DNA biosynthesis. In Laribacter hongkongensis (strain HLHK9), this protein is Thymidylate synthase.